Consider the following 523-residue polypeptide: REST corepressor 2 (523 aa).

The interval 1–43 is disordered; sequence MPSVMEKPSAGSGILSRSRAKTAPNGGQPHSEDDSSEEEHSHD. A compositionally biased stretch (basic and acidic residues) spans 30 to 43; that stretch reads HSEDDSSEEEHSHD. Serine 31, serine 35, serine 36, and serine 63 each carry phosphoserine. One can recognise an ELM2 domain in the interval 44-129; sequence SMIRVGTNYQ…KSLADLANFT (86 aa). Residue lysine 88 forms a Glycyl lysine isopeptide (Lys-Gly) (interchain with G-Cter in SUMO2) linkage. In terms of domain architecture, SANT 1 spans 130 to 181; it reads PFPDEWTVEDKVLFEQAFGFHGKCFQRIQQMLPDKVIPSLVKYYYSWKKTRS. Positions 185 to 244 are disordered; it reads VMDRQARRLGGRKDKEDSDELEEGRGAVSEGEPDTGDPKREPLPSRPLNARPGPGKKEVQ. Serine 202 carries the phosphoserine modification. Residues 283–314 adopt a coiled-coil conformation; the sequence is TLRGLDSQLISLKRQVQSMKQTNSSLRQALEG. An SANT 2 domain is found at 327–378; it reads KFNSRWTTDEQLLAVQAIRRYGKDFGAIAEVIGNKTLTQVKTFFVSYRRRFN. A disordered region spans residues 387-523; it reads EAEQDGAPAA…APLEPPAPSL (137 aa). The span at 432–459 shows a compositional bias: pro residues; it reads SVPPAPPPPPPPTSLSQPPPLLRPPLPT. Positions 460–482 are enriched in low complexity; that stretch reads APTLLRQPPPLQQGRFLQPRLAP. Arginine 479 carries the post-translational modification Asymmetric dimethylarginine. Residues 504-523 are compositionally biased toward pro residues; sequence GPQPPPTLVGAPLEPPAPSL.

This sequence belongs to the CoREST family. Predominantly, but not exclusively, expressed in neural tissue. Strongly expressed in neural domains of the developing brain of the developing mouse CNS.

Its subcellular location is the nucleus. May act as a component of a corepressor complex that represses transcription. This Mus musculus (Mouse) protein is REST corepressor 2 (Rcor2).